The sequence spans 226 residues: Gap junction beta-2 protein (226 aa).

The stretch at 2–13 is an intramembrane region; that stretch reads DWGALQTILGGV. Over 14 to 20 the chain is Cytoplasmic; sequence NKHSTSI. The helical transmembrane segment at 21–40 threads the bilayer; sequence GKIWLTVLFIFRIMILVVAA. The Extracellular segment spans residues 41–73; it reads KEVWGDEQADFVCNTLQPGCKNVCYDHYFPISH. Residues glutamate 42, glycine 45, and glutamate 47 each coordinate Ca(2+). Intrachain disulfides connect cysteine 53–cysteine 180, cysteine 60–cysteine 174, and cysteine 64–cysteine 169. Residues 74–94 form a helical membrane-spanning segment; it reads IRLWALQLIFVSTPALLVAMH. The Cytoplasmic portion of the chain corresponds to 95 to 135; it reads VAYRRHEKKRKFIKGEIKSEFKDIEEIKTQKVRIEGSLWWT. Residues 136–156 traverse the membrane as a helical segment; that stretch reads YTSSIFFRVIFEAAFMYVFYV. Over 157 to 189 the chain is Extracellular; the sequence is MYDGFSMQRLVKCNAWPCPNTVDCFVSRPTEKT. Residues 190–210 form a helical membrane-spanning segment; sequence VFTVFMIAVSGICILLNVTEL. At 211-226 the chain is on the cytoplasmic side; it reads CYLLIRYCSGRSKKPV.

It belongs to the connexin family. Beta-type (group I) subfamily. As to quaternary structure, a hemichannel or connexon is composed of a hexamer of connexins. A functional gap junction is formed by the apposition of two hemichannels. Forms heteromeric channels with GJB4. Interacts with CNST.

The protein resides in the cell membrane. The protein localises to the cell junction. It localises to the gap junction. Functionally, structural component of gap junctions. Gap junctions are dodecameric channels that connect the cytoplasm of adjoining cells. They are formed by the docking of two hexameric hemichannels, one from each cell membrane. Small molecules and ions diffuse from one cell to a neighboring cell via the central pore. This Pongo pygmaeus (Bornean orangutan) protein is Gap junction beta-2 protein (GJB2).